Consider the following 71-residue polypeptide: Cruzioseptin-2 (71 aa).

An N-terminal signal peptide occupies residues 1–22; sequence MAFLKKSLFLVLFLGLVSLSIC. Residues 23–43 constitute a propeptide that is removed on maturation; it reads EEEKREEENEEVQEDDDQSEE. Position 68 is a glutamine amide (Q68). Residues 70–71 constitute a propeptide that is removed on maturation; it reads EQ.

Expressed by the skin glands.

The protein resides in the secreted. Its function is as follows. Has antimicrobial activity against Gram-negative bacterium E.coli (MIC=26.35 uM), against Gram-positive bacterium S.aureus (MIC=6.59 uM) and against fungus C.albicans (MIC=13.18 uM). At higher concentrations also has a bactericidal and fungicidal effect. Has hemagglutinating activity against horse erythrocytes. The sequence is that of Cruzioseptin-2 from Cruziohyla calcarifer (Splendid leaf frog).